We begin with the raw amino-acid sequence, 82 residues long: Sec-independent protein translocase protein TatA (82 aa).

A helical transmembrane segment spans residues 1 to 21 (MGSFSIWHWLIVLLIVVMVFG). Residues 46–82 (GASTDDSATTSAPAGQVTNNSAAADKTTIDVEAKHKS) are disordered. Positions 49 to 67 (TDDSATTSAPAGQVTNNSA) are enriched in polar residues. A compositionally biased stretch (basic and acidic residues) spans 72–82 (TTIDVEAKHKS).

The protein belongs to the TatA/E family. As to quaternary structure, the Tat system comprises two distinct complexes: a TatABC complex, containing multiple copies of TatA, TatB and TatC subunits, and a separate TatA complex, containing only TatA subunits. Substrates initially bind to the TatABC complex, which probably triggers association of the separate TatA complex to form the active translocon.

It is found in the cell inner membrane. Functionally, part of the twin-arginine translocation (Tat) system that transports large folded proteins containing a characteristic twin-arginine motif in their signal peptide across membranes. TatA could form the protein-conducting channel of the Tat system. The polypeptide is Sec-independent protein translocase protein TatA (Acidovorax ebreus (strain TPSY) (Diaphorobacter sp. (strain TPSY))).